The chain runs to 348 residues: tRNA N6-adenosine threonylcarbamoyltransferase (348 aa).

His-118 and His-122 together coordinate Fe cation. Substrate-binding positions include 140–144 (LVSGG), Asp-173, Gly-186, Asp-190, and Asn-279. Asp-309 contacts Fe cation.

This sequence belongs to the KAE1 / TsaD family. Fe(2+) is required as a cofactor.

It is found in the cytoplasm. It catalyses the reaction L-threonylcarbamoyladenylate + adenosine(37) in tRNA = N(6)-L-threonylcarbamoyladenosine(37) in tRNA + AMP + H(+). Its function is as follows. Required for the formation of a threonylcarbamoyl group on adenosine at position 37 (t(6)A37) in tRNAs that read codons beginning with adenine. Is involved in the transfer of the threonylcarbamoyl moiety of threonylcarbamoyl-AMP (TC-AMP) to the N6 group of A37, together with TsaE and TsaB. TsaD likely plays a direct catalytic role in this reaction. This is tRNA N6-adenosine threonylcarbamoyltransferase from Lactiplantibacillus plantarum (strain ATCC BAA-793 / NCIMB 8826 / WCFS1) (Lactobacillus plantarum).